The sequence spans 448 residues: Exodeoxyribonuclease 7 large subunit (448 aa).

It belongs to the XseA family. Heterooligomer composed of large and small subunits.

The protein localises to the cytoplasm. It carries out the reaction Exonucleolytic cleavage in either 5'- to 3'- or 3'- to 5'-direction to yield nucleoside 5'-phosphates.. Its function is as follows. Bidirectionally degrades single-stranded DNA into large acid-insoluble oligonucleotides, which are then degraded further into small acid-soluble oligonucleotides. The protein is Exodeoxyribonuclease 7 large subunit of Shewanella sp. (strain MR-7).